A 208-amino-acid chain; its full sequence is UPF0637 protein Bcer98_2662 (208 aa).

This sequence belongs to the UPF0637 family.

The chain is UPF0637 protein Bcer98_2662 from Bacillus cytotoxicus (strain DSM 22905 / CIP 110041 / 391-98 / NVH 391-98).